Consider the following 225-residue polypeptide: Cyclin-dependent kinase inhibitor 3 (225 aa).

Disordered regions lie at residues 47 to 94 (AAAA…QRRR) and 130 to 169 (ERKS…PLSP). Positions 55–67 (CRRRHRRGGRRGC) are enriched in basic residues. Positions 71 to 82 (GAGSARACGARS) are enriched in low complexity. The span at 143–153 (VAAEHAGEHKH) shows a compositional bias: basic and acidic residues.

The protein belongs to the CDI family. ICK/KRP subfamily.

The polypeptide is Cyclin-dependent kinase inhibitor 3 (KRP3) (Oryza sativa subsp. japonica (Rice)).